We begin with the raw amino-acid sequence, 1039 residues long: Error-prone DNA polymerase (1039 aa).

It belongs to the DNA polymerase type-C family. DnaE2 subfamily.

It localises to the cytoplasm. It carries out the reaction DNA(n) + a 2'-deoxyribonucleoside 5'-triphosphate = DNA(n+1) + diphosphate. Its function is as follows. DNA polymerase involved in damage-induced mutagenesis and translesion synthesis (TLS). It is not the major replicative DNA polymerase. The protein is Error-prone DNA polymerase of Corynebacterium diphtheriae (strain ATCC 700971 / NCTC 13129 / Biotype gravis).